Consider the following 356-residue polypeptide: Calcium/calmodulin-dependent protein kinase type 1 (356 aa).

The Nuclear localization signal motif lies at 2–7 (PLFKRR). A Protein kinase domain is found at 22–278 (YDFRDVLGTG…CQSALEHPWI (257 aa)). Residues 28 to 36 (LGTGAFSKV) and lysine 52 contribute to the ATP site. The active-site Proton acceptor is aspartate 144. Residue threonine 179 is modified to Phosphothreonine; by ckk-1. The interval 278–318 (ISGNTAYTHDIHRTVAVHLKKSLAKRNWKKAFNAAAAIRQL) is autoinhibitory domain. The tract at residues 298–319 (KSLAKRNWKKAFNAAAAIRQLQ) is calmodulin-binding.

Belongs to the protein kinase superfamily. CAMK Ser/Thr protein kinase family. CaMK subfamily. Mg(2+) is required as a cofactor.

Its subcellular location is the nucleus. The protein localises to the cytoplasm. It carries out the reaction L-seryl-[protein] + ATP = O-phospho-L-seryl-[protein] + ADP + H(+). The enzyme catalyses L-threonyl-[protein] + ATP = O-phospho-L-threonyl-[protein] + ADP + H(+). Its activity is regulated as follows. Activated by Ca(2+)/calmodulin. Binding of calmodulin results in a conformational change that generates functional binding sites for both substrate and ATP, and thus relieves autoinhibition and lowers the Km of substrate binding. Must be phosphorylated by ckk-1 to be maximally active but this does not appear to be required for activity in AFD neurons. Functionally, calcium/calmodulin-dependent protein kinase that operates in the calcium-triggered CaMKK-CaMK1 signaling cascade which results in transcriptional activation. Transcriptional activation occurs at least in part through phosphorylation of crh-1. Regulates gene expression, sensory morphology, and function of the AFD thermosensory neurons. Involved in long-term adaptation of AFD neurons to temperatures warmer than the initial acclimatized cultivation temperature. Acts in the FLP thermal nociceptors to moderate the responsiveness to noxious heat and controls neuropeptide release from FLP neurons in response to temperature elevations. Regulates the dauer decision, the decision of the larvae to enter into the alternative stress-resistant and long-lived dauer developmental stage, based on the feeding state, primarily in the AWC sensory neurons. Acts non cell-autonomously in the AWC neurons to regulate expression of the daf-28 insulin-like peptide and cell-autonomously in the ASI sensory neurons to regulate expression of the growth promoting daf-7 in a food-regulated manner. Plays a role in memory-based thermal response of an individual AFD neuron cell. Involved in chemotaxis response in AWC neurons to attractant 2-heptanone, a volatile organic compound emitted by the nematode pathogenic bacterium B.nematocida B16. Represses transcription of glutamate receptor glr-1 in the nucleus basally and in response to change in synaptic activity. This Caenorhabditis briggsae protein is Calcium/calmodulin-dependent protein kinase type 1 (cmk-1).